Reading from the N-terminus, the 341-residue chain is Dihydroorotate dehydrogenase (quinone) (341 aa).

FMN contacts are provided by residues 61 to 65 and Thr-85; that span reads AGLDK. Lys-65 provides a ligand contact to substrate. Residue 110 to 114 participates in substrate binding; sequence NRMGF. 2 residues coordinate FMN: Asn-138 and Asn-171. Asn-171 provides a ligand contact to substrate. The Nucleophile role is filled by Ser-174. A substrate-binding site is contributed by Asn-176. The FMN site is built by Lys-216 and Thr-244. Residue 245 to 246 participates in substrate binding; sequence NT. Residues Gly-267, Gly-296, and 317 to 318 contribute to the FMN site; that span reads YS.

The protein belongs to the dihydroorotate dehydrogenase family. Type 2 subfamily. Monomer. The cofactor is FMN.

It localises to the cell membrane. The enzyme catalyses (S)-dihydroorotate + a quinone = orotate + a quinol. It participates in pyrimidine metabolism; UMP biosynthesis via de novo pathway; orotate from (S)-dihydroorotate (quinone route): step 1/1. Functionally, catalyzes the conversion of dihydroorotate to orotate with quinone as electron acceptor. The sequence is that of Dihydroorotate dehydrogenase (quinone) from Pseudomonas fluorescens (strain SBW25).